The following is a 382-amino-acid chain: MRVALVAGEHSGDRLGAGLIRAIRARCPEAEFDGVGGPLMQAEGLRSHYPMEALSVMGLVEVLRHLPRLLRIRRDLVARYRTDPPDVFVGIDLPDFNLSIERRLKAVGVPTVHYVSPQVWAWRQGRVRTIGRSVDRILALYPFEAEFYRRHGVPVDFVGHPAADRFPLQPDAGAARAALGLVDDGGGPWVALLPGSRLGEVQRHAELYARTVARLRERQPDVRFIAPLAWPGLRAVFYEALVQQGVSDAVQLFEGRADEVMAAADVVLTASGTATLEAMLLKRPMVVAYRLAPLTFWLMKRLVRVSHVSQPNLLAGEGLVEEYLQDAATPDNLAYALYRLLNDEPRSAYLRARFAELHGTLRRGADGQAAAAVLAAAGGNGS.

It belongs to the LpxB family.

It catalyses the reaction a lipid X + a UDP-2-N,3-O-bis[(3R)-3-hydroxyacyl]-alpha-D-glucosamine = a lipid A disaccharide + UDP + H(+). It participates in bacterial outer membrane biogenesis; LPS lipid A biosynthesis. Its function is as follows. Condensation of UDP-2,3-diacylglucosamine and 2,3-diacylglucosamine-1-phosphate to form lipid A disaccharide, a precursor of lipid A, a phosphorylated glycolipid that anchors the lipopolysaccharide to the outer membrane of the cell. This chain is Lipid-A-disaccharide synthase, found in Alkalilimnicola ehrlichii (strain ATCC BAA-1101 / DSM 17681 / MLHE-1).